Reading from the N-terminus, the 819-residue chain is Advillin (819 aa).

Residues 1-731 (MSLSSAFRTV…YEQLKNELGD (731 aa)) are core. The Gelsolin-like 1 repeat unit spans residues 24-105 (MELVLVPLSA…VQYHESDTFR (82 aa)). Phosphotyrosine is present on Tyr85. Residues 109 to 116 (KRGIIYKK) and 135 to 143 (RLLHVKGKR) contribute to the a 1,2-diacyl-sn-glycero-3-phospho-(1D-myo-inositol-4,5-bisphosphate) site. Gelsolin-like repeat units lie at residues 144 to 215 (NIRA…KEAA), 265 to 339 (TEVA…SAMF), 407 to 486 (LVPV…RHFM), 524 to 592 (NTKA…PEFW), and 631 to 704 (TEVT…PPTF). Residues 628–819 (FLVTEVTDFT…LQLKKEAGLF (192 aa)) form a required for interaction with F-actin region. The segment at 731 to 819 (DATAIVRITT…LQLKKEAGLF (89 aa)) is headpiece. The region spanning 753 to 819 (ESGPKYYPVE…LQLKKEAGLF (67 aa)) is the HP domain. Tyr758 bears the Phosphotyrosine mark.

The protein belongs to the villin/gelsolin family. As to quaternary structure, associates (via C-terminus) with actin. Interacts with F-actin. Interacts with SCARF1; the interaction occurs in embryonic dorsal root ganglions at 18 dpc and induces neurite-like outgrowth. Interacts with PLCE1. Interacts with ACTR2 and ACTR3; associates with the ARP2/3 complex. As to expression, expressed in dorsal root ganglion (DRG) neurons and superior cervical ganglia (SCG). Expressed in podocytes.

The protein localises to the cytoplasm. The protein resides in the cytoskeleton. Its subcellular location is the cell projection. It localises to the neuron projection. It is found in the axon. The protein localises to the lamellipodium. The protein resides in the cell junction. Its subcellular location is the focal adhesion. Functionally, ca(2+)-regulated actin-binding protein which plays an important role in actin bundling. May have a unique function in the morphogenesis of neuronal cells which form ganglia. Required for SREC1-mediated regulation of neurite-like outgrowth. Plays a role in regenerative sensory axon outgrowth and remodeling processes after peripheral injury in neonates. Involved in the formation of long fine actin-containing filopodia-like structures in fibroblast. Plays a role in ciliogenesis. In podocytes, controls lamellipodia formation through the regulation of EGF-induced diacylglycerol generation by PLCE1 and ARP2/3 complex assembly. This chain is Advillin, found in Rattus norvegicus (Rat).